A 102-amino-acid polypeptide reads, in one-letter code: Thioredoxin (102 aa).

A Thioredoxin domain is found at methionine 1–glutamine 102. Residues cysteine 28 and cysteine 31 are joined by a disulfide bond.

Belongs to the thioredoxin family.

Functionally, participates in various redox reactions through the reversible oxidation of its active center dithiol to a disulfide and catalyzes dithiol-disulfide exchange reactions. This Chlamydia muridarum (strain MoPn / Nigg) protein is Thioredoxin (trxA).